The primary structure comprises 105 residues: Protein SMALL AUXIN UP-REGULATED RNA 16 (105 aa).

The protein belongs to the ARG7 family. As to expression, expressed in etiolated hypocotyls, cotyledons, leaves, flowers and siliques.

The protein localises to the cell membrane. Provide a mechanistic link between auxin and plasma membrane H(+)-ATPases (PM H(+)-ATPases, e.g. AHA1 and AHA2), and triggers PM H(+)-ATPases activity by promoting phosphorylation of their C-terminal autoinhibitory domain as a result of PP2C-D subfamily of type 2C phosphatases inhibition, thus leading to the acidification of the apoplast and the facilitation of solutes and water uptake to drive cell expansion. Triggers plant growth probably by promoting cell elongation. Regulates branch angles and bending. The sequence is that of Protein SMALL AUXIN UP-REGULATED RNA 16 from Arabidopsis thaliana (Mouse-ear cress).